The primary structure comprises 441 residues: tRNA-2-methylthio-N(6)-dimethylallyladenosine synthase (441 aa).

One can recognise an MTTase N-terminal domain in the interval 5 to 120 (KLLYIETFGC…LPEMVRAAEQ (116 aa)). [4Fe-4S] cluster is bound by residues Cys-14, Cys-50, Cys-83, Cys-158, Cys-162, and Cys-165. Residues 144–374 (EGGGVTRFVT…QGLQRDMTIE (231 aa)) enclose the Radical SAM core domain. Residues 377–439 (AGFVGTCQAV…PNSLLGELAV (63 aa)) enclose the TRAM domain.

The protein belongs to the methylthiotransferase family. MiaB subfamily. As to quaternary structure, monomer. It depends on [4Fe-4S] cluster as a cofactor.

The protein resides in the cytoplasm. The enzyme catalyses N(6)-dimethylallyladenosine(37) in tRNA + (sulfur carrier)-SH + AH2 + 2 S-adenosyl-L-methionine = 2-methylsulfanyl-N(6)-dimethylallyladenosine(37) in tRNA + (sulfur carrier)-H + 5'-deoxyadenosine + L-methionine + A + S-adenosyl-L-homocysteine + 2 H(+). Its function is as follows. Catalyzes the methylthiolation of N6-(dimethylallyl)adenosine (i(6)A), leading to the formation of 2-methylthio-N6-(dimethylallyl)adenosine (ms(2)i(6)A) at position 37 in tRNAs that read codons beginning with uridine. In Geobacter metallireducens (strain ATCC 53774 / DSM 7210 / GS-15), this protein is tRNA-2-methylthio-N(6)-dimethylallyladenosine synthase.